A 247-amino-acid chain; its full sequence is Uridylate kinase (247 aa).

Residue 17-20 participates in ATP binding; the sequence is KFSG. UMP is bound at residue glycine 59. 2 residues coordinate ATP: glycine 60 and arginine 64. UMP is bound by residues aspartate 79 and 140-147; that span reads TGNPFFTT. ATP contacts are provided by threonine 167, tyrosine 173, and aspartate 176.

It belongs to the UMP kinase family. In terms of assembly, homohexamer.

The protein resides in the cytoplasm. It catalyses the reaction UMP + ATP = UDP + ADP. Its pathway is pyrimidine metabolism; CTP biosynthesis via de novo pathway; UDP from UMP (UMPK route): step 1/1. With respect to regulation, inhibited by UTP. Catalyzes the reversible phosphorylation of UMP to UDP. This Legionella pneumophila (strain Lens) protein is Uridylate kinase.